A 70-amino-acid polypeptide reads, in one-letter code: DNA gyrase inhibitor YacG (70 aa).

C21, C24, C36, and C40 together coordinate Zn(2+).

Belongs to the DNA gyrase inhibitor YacG family. In terms of assembly, interacts with GyrB. Requires Zn(2+) as cofactor.

In terms of biological role, inhibits all the catalytic activities of DNA gyrase by preventing its interaction with DNA. Acts by binding directly to the C-terminal domain of GyrB, which probably disrupts DNA binding by the gyrase. The polypeptide is DNA gyrase inhibitor YacG (Rhizobium meliloti (strain 1021) (Ensifer meliloti)).